We begin with the raw amino-acid sequence, 625 residues long: Beta-galactosidase large subunit (625 aa).

The active-site Proton donor is the Glu-465. The Nucleophile role is filled by Glu-533.

This sequence belongs to the glycosyl hydrolase 2 family. In terms of assembly, heterodimer of a large (LacL) and a small subunit (LacM).

The catalysed reaction is Hydrolysis of terminal non-reducing beta-D-galactose residues in beta-D-galactosides.. Its function is as follows. Component of a beta-galactosidase. The polypeptide is Beta-galactosidase large subunit (Latilactobacillus sakei (Lactobacillus sakei)).